The primary structure comprises 516 residues: Extracellular endo-inulinase inuB (516 aa).

Positions 1 to 25 (MLNPKVAYMVWMTCLGLTLPSQAQS) are cleaved as a signal peptide. Substrate is bound by residues 40–43 (WMNE), Q59, W67, and 99–100 (FT). The active site involves E43. N109 carries an N-linked (GlcNAc...) asparagine glycan. Substrate-binding positions include 175-176 (RD) and E233. Residues N372, N419, and N424 are each glycosylated (N-linked (GlcNAc...) asparagine).

The protein belongs to the glycosyl hydrolase 32 family.

It localises to the secreted. It catalyses the reaction Endohydrolysis of (2-&gt;1)-beta-D-fructosidic linkages in inulin.. Endo-inulinase involved in utilization of the plant storage polymer inulin, consisting of fructooligosaccharides with a degree of polymerization (DP) value from 2 to 60. This chain is Extracellular endo-inulinase inuB (inuB), found in Aspergillus niger.